Reading from the N-terminus, the 268-residue chain is Undecaprenyl-diphosphatase (268 aa).

8 helical membrane passes run 3–23 (VFNL…EFIP), 46–66 (FEVL…SAKL), 84–104 (FGIL…HGFI), 107–127 (VLFE…FILL), 144–164 (YPLP…IPGV), 184–204 (AAEF…AYDL), 218–238 (LIGV…RYLL), and 248–268 (LFGW…LVWG).

The protein belongs to the UppP family.

The protein resides in the cell inner membrane. The catalysed reaction is di-trans,octa-cis-undecaprenyl diphosphate + H2O = di-trans,octa-cis-undecaprenyl phosphate + phosphate + H(+). Its function is as follows. Catalyzes the dephosphorylation of undecaprenyl diphosphate (UPP). Confers resistance to bacitracin. The chain is Undecaprenyl-diphosphatase from Brucella anthropi (strain ATCC 49188 / DSM 6882 / CCUG 24695 / JCM 21032 / LMG 3331 / NBRC 15819 / NCTC 12168 / Alc 37) (Ochrobactrum anthropi).